Reading from the N-terminus, the 309-residue chain is Protoheme IX farnesyltransferase (309 aa).

The next 9 helical transmembrane spans lie at 30-49 (VMSL…PGGV), 53-75 (IGFT…NMWY), 98-118 (AGEA…MLGL), 123-143 (VAAG…SMWL), 151-171 (IVIG…AVTG), 178-198 (VLMF…LALF), 224-244 (ILIY…TEVA), 247-267 (VYLI…YDIW), and 285-305 (VFKF…LDAI).

It belongs to the UbiA prenyltransferase family. Protoheme IX farnesyltransferase subfamily. As to quaternary structure, interacts with CtaA.

It is found in the cell inner membrane. The catalysed reaction is heme b + (2E,6E)-farnesyl diphosphate + H2O = Fe(II)-heme o + diphosphate. It participates in porphyrin-containing compound metabolism; heme O biosynthesis; heme O from protoheme: step 1/1. Its function is as follows. Converts heme B (protoheme IX) to heme O by substitution of the vinyl group on carbon 2 of heme B porphyrin ring with a hydroxyethyl farnesyl side group. This chain is Protoheme IX farnesyltransferase, found in Jannaschia sp. (strain CCS1).